Reading from the N-terminus, the 101-residue chain is uncharacterized protein (101 aa).

3 helical membrane passes run 20 to 40 (KHFI…LLGL), 59 to 79 (GVIA…MYIA), and 81 to 101 (SEMW…ALFF).

Its subcellular location is the endoplasmic reticulum. The protein localises to the membrane. This is an uncharacterized protein from Saccharomyces cerevisiae (strain ATCC 204508 / S288c) (Baker's yeast).